The primary structure comprises 287 residues: Elongation factor Ts (287 aa).

The segment at T77–V80 is involved in Mg(2+) ion dislocation from EF-Tu.

It belongs to the EF-Ts family.

The protein resides in the cytoplasm. In terms of biological role, associates with the EF-Tu.GDP complex and induces the exchange of GDP to GTP. It remains bound to the aminoacyl-tRNA.EF-Tu.GTP complex up to the GTP hydrolysis stage on the ribosome. This is Elongation factor Ts from Wolbachia sp. subsp. Brugia malayi (strain TRS).